A 262-amino-acid polypeptide reads, in one-letter code: tRNA pseudouridine synthase A (262 aa).

Asp-54 acts as the Nucleophile in catalysis. Residue Tyr-113 coordinates substrate.

Belongs to the tRNA pseudouridine synthase TruA family. In terms of assembly, homodimer.

The enzyme catalyses uridine(38/39/40) in tRNA = pseudouridine(38/39/40) in tRNA. Formation of pseudouridine at positions 38, 39 and 40 in the anticodon stem and loop of transfer RNAs. This is tRNA pseudouridine synthase A from Lactobacillus acidophilus (strain ATCC 700396 / NCK56 / N2 / NCFM).